The following is a 379-amino-acid chain: Cytochrome b (379 aa).

The next 4 helical transmembrane spans lie at 33–53, 77–98, 113–133, and 178–198; these read FGSL…FLAM, WLIR…YLHI, WNIG…GYVL, and FFAF…VHLL. Heme b contacts are provided by His83 and His97. Residues His182 and His196 each contribute to the heme b site. An a ubiquinone-binding site is contributed by His201. Helical transmembrane passes span 226-246, 288-308, 320-340, and 347-367; these read TKDF…VLFF, MGGV…PHIQ, ISQF…WIGG, and FIII…AFLP.

Belongs to the cytochrome b family. The cytochrome bc1 complex contains 11 subunits: 3 respiratory subunits (MT-CYB, CYC1 and UQCRFS1), 2 core proteins (UQCRC1 and UQCRC2) and 6 low-molecular weight proteins (UQCRH/QCR6, UQCRB/QCR7, UQCRQ/QCR8, UQCR10/QCR9, UQCR11/QCR10 and a cleavage product of UQCRFS1). This cytochrome bc1 complex then forms a dimer. Requires heme b as cofactor.

It is found in the mitochondrion inner membrane. Its function is as follows. Component of the ubiquinol-cytochrome c reductase complex (complex III or cytochrome b-c1 complex) that is part of the mitochondrial respiratory chain. The b-c1 complex mediates electron transfer from ubiquinol to cytochrome c. Contributes to the generation of a proton gradient across the mitochondrial membrane that is then used for ATP synthesis. The sequence is that of Cytochrome b (MT-CYB) from Dipodomys ordii (Ord's kangaroo rat).